Consider the following 346-residue polypeptide: N-acetyl-gamma-glutamyl-phosphate reductase (346 aa).

The active site involves Cys150.

The protein belongs to the NAGSA dehydrogenase family. Type 1 subfamily.

The protein resides in the cytoplasm. The enzyme catalyses N-acetyl-L-glutamate 5-semialdehyde + phosphate + NADP(+) = N-acetyl-L-glutamyl 5-phosphate + NADPH + H(+). It functions in the pathway amino-acid biosynthesis; L-arginine biosynthesis; N(2)-acetyl-L-ornithine from L-glutamate: step 3/4. Its function is as follows. Catalyzes the NADPH-dependent reduction of N-acetyl-5-glutamyl phosphate to yield N-acetyl-L-glutamate 5-semialdehyde. The sequence is that of N-acetyl-gamma-glutamyl-phosphate reductase from Alkaliphilus metalliredigens (strain QYMF).